The chain runs to 203 residues: dITP/XTP pyrophosphatase (203 aa).

8-13 (SNNAGK) serves as a coordination point for substrate. Mg(2+) contacts are provided by Asp40 and Asp69. The Proton acceptor role is filled by Asp69. Residues Ser70, 152–155 (FGYD), Lys175, and 180–181 (HR) contribute to the substrate site.

The protein belongs to the HAM1 NTPase family. As to quaternary structure, homodimer. Mg(2+) serves as cofactor.

It catalyses the reaction XTP + H2O = XMP + diphosphate + H(+). It carries out the reaction dITP + H2O = dIMP + diphosphate + H(+). The enzyme catalyses ITP + H2O = IMP + diphosphate + H(+). In terms of biological role, pyrophosphatase that catalyzes the hydrolysis of nucleoside triphosphates to their monophosphate derivatives, with a high preference for the non-canonical purine nucleotides XTP (xanthosine triphosphate), dITP (deoxyinosine triphosphate) and ITP. Seems to function as a house-cleaning enzyme that removes non-canonical purine nucleotides from the nucleotide pool, thus preventing their incorporation into DNA/RNA and avoiding chromosomal lesions. This is dITP/XTP pyrophosphatase from Nitrosomonas europaea (strain ATCC 19718 / CIP 103999 / KCTC 2705 / NBRC 14298).